The primary structure comprises 795 residues: Mitochondrial intermediate peptidase (795 aa).

The N-terminal 22 residues, 1-22 (MLKTLNRRSWTCRQCIRILRRN), are a transit peptide targeting the mitochondrion. Zn(2+) is bound at residue H561. E562 is a catalytic residue. 2 residues coordinate Zn(2+): H565 and H568.

This sequence belongs to the peptidase M3 family. It depends on Zn(2+) as a cofactor.

The protein localises to the mitochondrion matrix. It carries out the reaction Release of an N-terminal octapeptide as second stage of processing of some proteins imported into the mitochondrion.. In terms of biological role, cleaves proteins, imported into the mitochondrion, to their mature size. While most mitochondrial precursor proteins are processed to the mature form in one step by mitochondrial processing peptidase (MPP), the sequential cleavage by MIP of an octapeptide after initial processing by MPP is a required step for a subgroup of nuclear-encoded precursor proteins destined for the matrix or the inner membrane. The protein is Mitochondrial intermediate peptidase (OCT1) of Coccidioides immitis (strain RS) (Valley fever fungus).